A 158-amino-acid chain; its full sequence is SsrA-binding protein (158 aa).

The interval 133–158 is disordered; sequence KIHDKRETEAKRDWNRQKQRLLKDNA. Positions 136–158 are enriched in basic and acidic residues; it reads DKRETEAKRDWNRQKQRLLKDNA.

Belongs to the SmpB family.

The protein resides in the cytoplasm. Required for rescue of stalled ribosomes mediated by trans-translation. Binds to transfer-messenger RNA (tmRNA), required for stable association of tmRNA with ribosomes. tmRNA and SmpB together mimic tRNA shape, replacing the anticodon stem-loop with SmpB. tmRNA is encoded by the ssrA gene; the 2 termini fold to resemble tRNA(Ala) and it encodes a 'tag peptide', a short internal open reading frame. During trans-translation Ala-aminoacylated tmRNA acts like a tRNA, entering the A-site of stalled ribosomes, displacing the stalled mRNA. The ribosome then switches to translate the ORF on the tmRNA; the nascent peptide is terminated with the 'tag peptide' encoded by the tmRNA and targeted for degradation. The ribosome is freed to recommence translation, which seems to be the essential function of trans-translation. This Ruegeria pomeroyi (strain ATCC 700808 / DSM 15171 / DSS-3) (Silicibacter pomeroyi) protein is SsrA-binding protein.